The following is a 200-amino-acid chain: MGFTGPLKYNKWKIKIAALRMYTCCVERIDYDEFFEKCSLPDTLNSWFLVTQLHVWMCLVRMKQEGRAGKYMCRYIVHSMWEDVEQRGKVMGIDSVTLKNSMRSMTEIFYAAIFGYDEGIISDDRILAAALWRNLLNKQCDDPRKLELLVEYVRKQVQFLDTLDGEDLLLTGEVVWRPLVEKDAQSILKPSTPTYNDEGL.

The protein belongs to the CBP3 family.

The protein resides in the mitochondrion inner membrane. In terms of biological role, required for the assembly of the ubiquinol-cytochrome c reductase complex (mitochondrial respiratory chain complex III or cytochrome b-c1 complex). May be involved in cytochrome b translation and/or stability. The polypeptide is Ubiquinol-cytochrome-c reductase complex assembly factor 1 (uqcc1) (Xenopus laevis (African clawed frog)).